The sequence spans 1156 residues: ATP-dependent RNA helicase glh-4 (1156 aa).

4 disordered regions span residues 1 to 81 (MSFS…GAPS), 194 to 213 (TGVG…GQQP), 231 to 423 (SSSG…DSST), and 436 to 522 (HRAS…SGLG). The span at 12-22 (AEVKVAEDVPE) shows a compositional bias: basic and acidic residues. Positions 24–34 (NVPPPVEPPRA) are enriched in pro residues. Polar residues-rich tracts occupy residues 60-73 (ITTS…TTPK), 194-211 (TGVG…SFGQ), and 243-258 (TESS…TSQP). Positions 259-281 (GFGGDSSTGFGSGLKAGFGGHGA) are enriched in gly residues. The segment covering 307–319 (ASSSNESAFGQQS) has biased composition (polar residues). Gly residues-rich tracts occupy residues 321–332 (GFGGATKNGFGG) and 342–358 (SKAG…GGQK). Composition is skewed to polar residues over residues 362–371 (TESSGFPTKE) and 395–406 (PSTTDSSSGQQT). Positions 408–423 (GFGGASKPGFGGDSST) are enriched in gly residues. 2 stretches are compositionally biased toward polar residues: residues 440–451 (TAENSGLPTETT) and 464–476 (ASSS…GQQS). Gly residues predominate over residues 478 to 489 (GFGGATKNGFGG). 5 consecutive CCHC-type zinc fingers follow at residues 570 to 587 (RGCH…ECDK), 593 to 610 (FPCR…DCDQ), 616 to 633 (GPCR…DCDQ), 639 to 656 (GPCR…DCQN), and 665 to 682 (EPCR…ECPT). Residues 736 to 764 (SFDGFKILPQDLHDNLKRMKMNRPTPIQR) carry the Q motif motif. Positions 767–951 (FFPIMHGNDV…LPKFVKEGYT (185 aa)) constitute a Helicase ATP-binding domain. 780–787 (AHTGSGKT) serves as a coordination point for ATP. The DEAD box motif lies at 897–900 (DEAD). In terms of domain architecture, Helicase C-terminal spans 986–1139 (GIDENTVTLL…EVPEWLTEGA (154 aa)). The interval 1135–1156 (LTEGAGHQEEGGDDWNEQEQEW) is disordered. A compositionally biased stretch (acidic residues) spans 1145-1156 (GGDDWNEQEQEW).

The protein belongs to the DEAD box helicase family. DDX4/VASA subfamily. As to quaternary structure, interacts (via C-terminus) with kgb-1.

The catalysed reaction is ATP + H2O = ADP + phosphate + H(+). Its function is as follows. Probable ATP-binding RNA helicase. May act redundantly with the P-granule component glh-1 to regulate the formation of the granular structure of P-granules in embryos. May protect somatic cells from excessive apoptosis during normal development. This is ATP-dependent RNA helicase glh-4 from Caenorhabditis elegans.